The chain runs to 455 residues: GTPase Der (455 aa).

EngA-type G domains lie at 4 to 169 (PVVA…PPKS) and 178 to 353 (IQLA…EQHR). Residues 10 to 17 (GRPNVGKS), 57 to 61 (DTGGL), 120 to 123 (NKCE), 184 to 191 (GRPNVGKS), 231 to 235 (DTAGI), and 296 to 299 (NKWD) each bind GTP. The region spanning 354–439 (RRVSTSVVNE…PLKLFWRGKQ (86 aa)) is the KH-like domain.

This sequence belongs to the TRAFAC class TrmE-Era-EngA-EngB-Septin-like GTPase superfamily. EngA (Der) GTPase family. In terms of assembly, associates with the 50S ribosomal subunit.

Functionally, GTPase that plays an essential role in the late steps of ribosome biogenesis. The chain is GTPase Der from Synechococcus sp. (strain WH7803).